A 279-amino-acid polypeptide reads, in one-letter code: RRP15-like protein (279 aa).

Disordered stretches follow at residues 1–40 (MALLTAKRPKKEAAPATDTSNNESDSEDSQNVDGDTGANA), 56–120 (GPTV…TERR), and 200–279 (KSTA…DEED). Basic and acidic residues predominate over residues 73 to 83 (KTSEAAKKPGF). Composition is skewed to acidic residues over residues 93 to 104 (KEEDDDDEEDGD) and 213 to 224 (QETDDDDEDDTA). Residues 232 to 245 (KKSEWNVLREDFMT) show a composition bias toward basic and acidic residues. Acidic residues predominate over residues 267–279 (DEADDSDDDDEED).

The protein belongs to the RRP15 family.

The sequence is that of RRP15-like protein from Drosophila pseudoobscura pseudoobscura (Fruit fly).